The primary structure comprises 195 residues: ATP-dependent Clp protease proteolytic subunit (195 aa).

Ser98 acts as the Nucleophile in catalysis. His123 is an active-site residue.

This sequence belongs to the peptidase S14 family. In terms of assembly, fourteen ClpP subunits assemble into 2 heptameric rings which stack back to back to give a disk-like structure with a central cavity, resembling the structure of eukaryotic proteasomes.

It is found in the cytoplasm. The catalysed reaction is Hydrolysis of proteins to small peptides in the presence of ATP and magnesium. alpha-casein is the usual test substrate. In the absence of ATP, only oligopeptides shorter than five residues are hydrolyzed (such as succinyl-Leu-Tyr-|-NHMec, and Leu-Tyr-Leu-|-Tyr-Trp, in which cleavage of the -Tyr-|-Leu- and -Tyr-|-Trp bonds also occurs).. Its function is as follows. Cleaves peptides in various proteins in a process that requires ATP hydrolysis. Has a chymotrypsin-like activity. Plays a major role in the degradation of misfolded proteins. The chain is ATP-dependent Clp protease proteolytic subunit from Staphylococcus aureus (strain Mu3 / ATCC 700698).